Here is a 127-residue protein sequence, read N- to C-terminus: Large ribosomal subunit protein bL17 (127 aa).

The protein belongs to the bacterial ribosomal protein bL17 family. As to quaternary structure, part of the 50S ribosomal subunit. Contacts protein L32.

In Lactobacillus helveticus (strain DPC 4571), this protein is Large ribosomal subunit protein bL17.